We begin with the raw amino-acid sequence, 929 residues long: Protocadherin gamma-B7 (929 aa).

The first 30 residues, 1–30 (MGGSCAQRRRAGPRQVLFPLLLPLFYPTLC), serve as a signal peptide directing secretion. 6 Cadherin domains span residues 31–133 (EPIR…APQF), 134–242 (RKDE…PPVF), 243–347 (SQDV…SPEI), 348–452 (IITS…APVF), 453–562 (GQSA…APRV), and 570–675 (DGSA…LPDF). At 31–691 (EPIRYSIPEE…SDSQAEMQFY (661 aa)) the chain is on the extracellular side. Asparagine 419 and asparagine 545 each carry an N-linked (GlcNAc...) asparagine glycan. Residues 692 to 712 (LVVALALISVLFLLAVILAIA) form a helical membrane-spanning segment. Residues 713 to 929 (LRLRQSFSPT…KKKSGKKEKK (217 aa)) lie on the Cytoplasmic side of the membrane. Disordered stretches follow at residues 806 to 838 (QAPP…WPNN) and 899 to 929 (ATLT…KEKK). A compositionally biased stretch (polar residues) spans 807–838 (APPNTDWRFSQAQRPGTSGSQNGDDTGTWPNN). Positions 919 to 929 (NKKKSGKKEKK) are enriched in basic residues.

It is found in the cell membrane. Its function is as follows. Potential calcium-dependent cell-adhesion protein. May be involved in the establishment and maintenance of specific neuronal connections in the brain. The protein is Protocadherin gamma-B7 (PCDHGB7) of Homo sapiens (Human).